A 302-amino-acid chain; its full sequence is tRNA pseudouridine synthase B (302 aa).

Catalysis depends on D38, which acts as the Nucleophile.

It belongs to the pseudouridine synthase TruB family. Type 1 subfamily.

It carries out the reaction uridine(55) in tRNA = pseudouridine(55) in tRNA. Functionally, responsible for synthesis of pseudouridine from uracil-55 in the psi GC loop of transfer RNAs. This Ligilactobacillus salivarius (strain UCC118) (Lactobacillus salivarius) protein is tRNA pseudouridine synthase B.